A 60-amino-acid polypeptide reads, in one-letter code: uncharacterized protein (60 aa).

This is an uncharacterized protein from Methanocaldococcus jannaschii (strain ATCC 43067 / DSM 2661 / JAL-1 / JCM 10045 / NBRC 100440) (Methanococcus jannaschii).